Consider the following 442-residue polypeptide: Inhibitor of Apoptosis OPG037 (442 aa).

ANK repeat units follow at residues 67 to 96 (DGNY…DPNA), 100 to 131 (HNKT…KINN), 203 to 233 (DGNT…DVNK), 237 to 267 (FGDS…VITD), 292 to 321 (YDST…ICED), and 323 to 347 (MYYA…SVDS).

Belongs to the orthopoxvirus OPG037 family. May interact with host caspase-9-Apaf-1 complex.

The protein localises to the host cytoplasm. Functionally, inhibits host apoptosis. Acts by associating with host apoptosome. This Monkeypox virus protein is Inhibitor of Apoptosis OPG037 (OPG037).